Here is a 179-residue protein sequence, read N- to C-terminus: ATP synthase subunit delta (179 aa).

The protein belongs to the ATPase delta chain family. In terms of assembly, F-type ATPases have 2 components, F(1) - the catalytic core - and F(0) - the membrane proton channel. F(1) has five subunits: alpha(3), beta(3), gamma(1), delta(1), epsilon(1). F(0) has three main subunits: a(1), b(2) and c(10-14). The alpha and beta chains form an alternating ring which encloses part of the gamma chain. F(1) is attached to F(0) by a central stalk formed by the gamma and epsilon chains, while a peripheral stalk is formed by the delta and b chains.

Its subcellular location is the cell inner membrane. F(1)F(0) ATP synthase produces ATP from ADP in the presence of a proton or sodium gradient. F-type ATPases consist of two structural domains, F(1) containing the extramembraneous catalytic core and F(0) containing the membrane proton channel, linked together by a central stalk and a peripheral stalk. During catalysis, ATP synthesis in the catalytic domain of F(1) is coupled via a rotary mechanism of the central stalk subunits to proton translocation. Functionally, this protein is part of the stalk that links CF(0) to CF(1). It either transmits conformational changes from CF(0) to CF(1) or is implicated in proton conduction. The sequence is that of ATP synthase subunit delta from Burkholderia multivorans (strain ATCC 17616 / 249).